The primary structure comprises 177 residues: Large ribosomal subunit protein uL6 (177 aa).

It belongs to the universal ribosomal protein uL6 family. Part of the 50S ribosomal subunit.

This protein binds to the 23S rRNA, and is important in its secondary structure. It is located near the subunit interface in the base of the L7/L12 stalk, and near the tRNA binding site of the peptidyltransferase center. The sequence is that of Large ribosomal subunit protein uL6 from Enterobacter sp. (strain 638).